A 1187-amino-acid polypeptide reads, in one-letter code: DNA excision repair protein CSB (1187 aa).

Over residues 31 to 43 the composition is skewed to polar residues; that stretch reads QATTDPADSSGPT. Disordered regions lie at residues 31 to 53, 75 to 102, 217 to 242, and 265 to 351; these read QATTDPADSSGPTINGGHQPDDA, IKGAKLKQPSGNKPHEHKGKDQPDHHGA, KRVELPEPSHRQDDSAGQTEEAMEAS, and DSES…EGSD. 2 stretches are compositionally biased toward basic and acidic residues: residues 92–101 and 217–230; these read KGKDQPDHHG and KRVELPEPSHRQDD. Basic residues predominate over residues 300 to 319; sequence KRPRNKTKRPLPGKKWRKAN. Residues 339 to 351 are compositionally biased toward acidic residues; the sequence is SDDDEDQVTEGSD. The 197-residue stretch at 384–580 folds into the Helicase ATP-binding domain; the sequence is WELHCQRAGG…WSLFDFVFPG (197 aa). An ATP-binding site is contributed by 397–404; sequence DEMGLGKT. Residues 457–480 form a disordered region; sequence SSSKKSKRSSDSDSEASWDSDQEE. Over residues 468-480 the composition is skewed to acidic residues; that stretch reads SDSEASWDSDQEE. Residues 531–534 carry the DEGH box motif; the sequence is DEGH. One can recognise a Helicase C-terminal domain in the interval 716–876; the sequence is KVVEQVLKVW…RRFFKARDMK (161 aa). 2 disordered regions span residues 916–945 and 1095–1116; these read LYAASATPTTSGTEPSSSRHGQGKEDHCPD and GSASNHTSSSSGNGRASSSSTR. The segment covering 918 to 933 has biased composition (low complexity); it reads AASATPTTSGTEPSSS.

This sequence belongs to the SNF2/RAD54 helicase family. Homodimer. Binds DNA. Expressed in proliferating tissues. Highly expressed in shoot apical meristem (SAM). Expressed in roots, young leaves, flag leaves, and panicles. Expressed at very low levels in mature leaves.

The protein resides in the nucleus. Its function is as follows. Essential factor involved in transcription-coupled nucleotide excision repair (TCR) which allows RNA polymerase II-blocking lesions to be rapidly removed from the transcribed strand of active genes. Upon DNA-binding, it locally modifies DNA conformation by wrapping the DNA around itself, thereby modifying the interface between stalled RNA polymerase II and DNA. It is required for transcription-coupled repair complex formation. The protein is DNA excision repair protein CSB of Oryza sativa subsp. japonica (Rice).